The chain runs to 140 residues: Ribosome maturation factor RimP (140 aa).

It belongs to the RimP family.

It localises to the cytoplasm. In terms of biological role, required for maturation of 30S ribosomal subunits. The polypeptide is Ribosome maturation factor RimP (Campylobacter jejuni subsp. jejuni serotype O:6 (strain 81116 / NCTC 11828)).